A 204-amino-acid polypeptide reads, in one-letter code: IMPACT family member YigZ (204 aa).

The protein belongs to the IMPACT family. Monomer.

This chain is IMPACT family member YigZ (yigZ), found in Escherichia coli (strain K12).